We begin with the raw amino-acid sequence, 281 residues long: MKVLVPATTTNLGAGFDVFGLALDLFNEVEFSFDTKETTIESTGKYASDLKDHNLFFEVFRFFERKTGYRVPPVRIKQTCNIPVSSGLGSSAAVIVAALHIANEGTGRNLSREDLMKLAVELEGHPDNVVPAFTGGLVVCYQNGSHLDFEKFEIDLSLTFFVPNFSMCTNEMRKILPEKVPFEDAVFNIKNSCQFLAKIAAGKIKEALKYVGDRLHQNYRINGNKKMKEFVEAILSKNPEYWFVSGSGPSVCSNINDFEGIPYLKDVLKLRVNNRGMIVSE.

Residue 83-93 (PVSSGLGSSAA) coordinates ATP.

Belongs to the GHMP kinase family. Homoserine kinase subfamily.

It localises to the cytoplasm. The enzyme catalyses L-homoserine + ATP = O-phospho-L-homoserine + ADP + H(+). The protein operates within amino-acid biosynthesis; L-threonine biosynthesis; L-threonine from L-aspartate: step 4/5. Functionally, catalyzes the ATP-dependent phosphorylation of L-homoserine to L-homoserine phosphate. The polypeptide is Homoserine kinase (Thermotoga petrophila (strain ATCC BAA-488 / DSM 13995 / JCM 10881 / RKU-1)).